The primary structure comprises 355 residues: Mitogen-activated protein kinase (355 aa).

Residues 23 to 311 enclose the Protein kinase domain; the sequence is YDIQDVVGEG…VEEALKHPYL (289 aa). Residues 29 to 37 and K52 each bind ATP; that span reads VGEGAYGVV. D147 (proton acceptor) is an active-site residue. A Phosphothreonine modification is found at T183. Positions 183 to 185 match the TXY motif; the sequence is TEY. Y185 bears the Phosphotyrosine mark.

Belongs to the protein kinase superfamily. CMGC Ser/Thr protein kinase family. MAP kinase subfamily. In terms of processing, dually phosphorylated on Thr-183 and Tyr-185, which activates the enzyme.

The protein resides in the nucleus. It carries out the reaction L-seryl-[protein] + ATP = O-phospho-L-seryl-[protein] + ADP + H(+). The catalysed reaction is L-threonyl-[protein] + ATP = O-phospho-L-threonyl-[protein] + ADP + H(+). Activated by tyrosine and threonine phosphorylation. In terms of biological role, responds to activation by environmental stress by phosphorylating downstream targets. The protein is Mitogen-activated protein kinase (MAPK) of Fusarium vanettenii (Neocosmospora pisi).